Here is a 356-residue protein sequence, read N- to C-terminus: Chorismate synthase (356 aa).

NADP(+) contacts are provided by Arg48 and Arg54. Residues 125–127, 237–238, Gly282, 297–301, and Arg323 contribute to the FMN site; these read RSS, NA, and KPTSS.

The protein belongs to the chorismate synthase family. In terms of assembly, homotetramer. The cofactor is FMNH2.

The catalysed reaction is 5-O-(1-carboxyvinyl)-3-phosphoshikimate = chorismate + phosphate. The protein operates within metabolic intermediate biosynthesis; chorismate biosynthesis; chorismate from D-erythrose 4-phosphate and phosphoenolpyruvate: step 7/7. In terms of biological role, catalyzes the anti-1,4-elimination of the C-3 phosphate and the C-6 proR hydrogen from 5-enolpyruvylshikimate-3-phosphate (EPSP) to yield chorismate, which is the branch point compound that serves as the starting substrate for the three terminal pathways of aromatic amino acid biosynthesis. This reaction introduces a second double bond into the aromatic ring system. This is Chorismate synthase from Rhizorhabdus wittichii (strain DSM 6014 / CCUG 31198 / JCM 15750 / NBRC 105917 / EY 4224 / RW1) (Sphingomonas wittichii).